The primary structure comprises 228 residues: N-(5'-phosphoribosyl)anthranilate isomerase (228 aa).

This sequence belongs to the TrpF family.

The catalysed reaction is N-(5-phospho-beta-D-ribosyl)anthranilate = 1-(2-carboxyphenylamino)-1-deoxy-D-ribulose 5-phosphate. The protein operates within amino-acid biosynthesis; L-tryptophan biosynthesis; L-tryptophan from chorismate: step 3/5. This is N-(5'-phosphoribosyl)anthranilate isomerase from Azorhizobium caulinodans (strain ATCC 43989 / DSM 5975 / JCM 20966 / LMG 6465 / NBRC 14845 / NCIMB 13405 / ORS 571).